The sequence spans 384 residues: Lipid-A-disaccharide synthase (384 aa).

This sequence belongs to the LpxB family.

It catalyses the reaction a lipid X + a UDP-2-N,3-O-bis[(3R)-3-hydroxyacyl]-alpha-D-glucosamine = a lipid A disaccharide + UDP + H(+). It participates in bacterial outer membrane biogenesis; LPS lipid A biosynthesis. Its function is as follows. Condensation of UDP-2,3-diacylglucosamine and 2,3-diacylglucosamine-1-phosphate to form lipid A disaccharide, a precursor of lipid A, a phosphorylated glycolipid that anchors the lipopolysaccharide to the outer membrane of the cell. The polypeptide is Lipid-A-disaccharide synthase (Neisseria meningitidis serogroup C / serotype 2a (strain ATCC 700532 / DSM 15464 / FAM18)).